A 1373-amino-acid polypeptide reads, in one-letter code: DNA-directed RNA polymerase subunit beta (1373 aa).

The protein belongs to the RNA polymerase beta chain family. As to quaternary structure, the RNAP catalytic core consists of 2 alpha, 1 beta, 1 beta' and 1 omega subunit. When a sigma factor is associated with the core the holoenzyme is formed, which can initiate transcription.

It catalyses the reaction RNA(n) + a ribonucleoside 5'-triphosphate = RNA(n+1) + diphosphate. DNA-dependent RNA polymerase catalyzes the transcription of DNA into RNA using the four ribonucleoside triphosphates as substrates. This is DNA-directed RNA polymerase subunit beta from Rickettsia rickettsii (strain Iowa).